The primary structure comprises 57 residues: Large ribosomal subunit protein bL33 (57 aa).

It belongs to the bacterial ribosomal protein bL33 family.

The sequence is that of Large ribosomal subunit protein bL33 from Akkermansia muciniphila (strain ATCC BAA-835 / DSM 22959 / JCM 33894 / BCRC 81048 / CCUG 64013 / CIP 107961 / Muc).